The primary structure comprises 353 residues: MSEPLKPRIDFAEPLKEEPTSAFKAQQTFSEAESRTFAPAAIDERPEDEGVAEAAVDAALRPKRSLWRKMVMGGLALFGASVVGQGVQWTMNAWQTQDWVALGGCAAGALIVGAGVGSVVTEWRRLWRLRQRAHERDEARELLHSHSVGKGRAFCEKLAQQAGIDQSHPVLQRWYAAIHETQNDREIVGLYANLVQPVLDAQARREISRFAAESTLMIAVSPLALVDMAFIAWRNLRLINRIATLYGIELGYYSRLRLFRLVLLNIAFAGASELVREVGMDWMSQDLAARLSTRAAQGIGAGLLTARLGIKAMELCRPLPWIDNDKPRLGDFRRQLIGQLKETLQKSKSSPEK.

The segment covering 1 to 19 (MSEPLKPRIDFAEPLKEEP) has biased composition (basic and acidic residues). Residues 1–35 (MSEPLKPRIDFAEPLKEEPTSAFKAQQTFSEAESR) form a disordered region. 3 helical membrane passes run 70–90 (MVMG…VQWT), 100–120 (VALG…GSVV), and 213–233 (ESTL…FIAW).

The protein belongs to the UPF0283 family.

Its subcellular location is the cell inner membrane. This Salmonella paratyphi A (strain AKU_12601) protein is UPF0283 membrane protein YcjF.